The primary structure comprises 575 residues: Flagellin A (575 aa).

A run of 3 repeats spans residues 405–409 (GSGFS), 411–415 (GSGFS), and 447–450 (GSGF).

Belongs to the bacterial flagellin family. In terms of assembly, heteromer of flaA and flaB.

Its subcellular location is the secreted. It localises to the bacterial flagellum. Functionally, flagellin is the subunit protein which polymerizes to form the filaments of bacterial flagella. This is Flagellin A (flaA) from Campylobacter jejuni.